The primary structure comprises 792 residues: Protein SEY1 homolog 2 (792 aa).

Residues 1-638 are Cytoplasmic-facing; that stretch reads MEQIITGDGA…NIKAQANREQ (638 aa). Positions 28–245 constitute a GB1/RHD3-type G domain; sequence GVDYHTVAII…LKDYLFAEKS (218 aa). 38-45 lines the GTP pocket; that stretch reads GPQSSGKS. A helical membrane pass occupies residues 639-659; that stretch reads IPGWAWLATFLCSSNYIMKLL. Over 660–662 the chain is Lumenal; it reads ANP. Residues 663–683 form a helical membrane-spanning segment; that stretch reads IFFALAVIIGGIYSILRMLGL. Topologically, residues 684 to 792 are cytoplasmic; sequence QDVAKKTLLD…LTRTQSLEFM (109 aa). Residues 691-718 are a coiled coil; that stretch reads LLDKFNSLLKNLTKDENEQEKEGEENEE. The disordered stretch occupies residues 703-792; sequence TKDENEQEKE…LTRTQSLEFM (90 aa). The span at 707 to 723 shows a compositional bias: acidic residues; the sequence is NEQEKEGEENEEPEEDQ. Composition is skewed to polar residues over residues 739–751 and 764–774; these read SVSQ…SIYK and IPQTSPLGNND.

Belongs to the TRAFAC class dynamin-like GTPase superfamily. GB1/RHD3 GTPase family. RHD3 subfamily.

The protein resides in the endoplasmic reticulum membrane. In terms of biological role, probable GTP-binding protein that may be involved in cell development. The sequence is that of Protein SEY1 homolog 2 from Trichomonas vaginalis (strain ATCC PRA-98 / G3).